The chain runs to 48 residues: ATP synthase protein 8 (48 aa).

The chain crosses the membrane as a helical span at residues 12 to 32; the sequence is QLTYGLLLITVLLILFSQFFL.

This sequence belongs to the ATPase protein 8 family. As to quaternary structure, F-type ATPases have 2 components, CF(1) - the catalytic core - and CF(0) - the membrane proton channel.

The protein resides in the mitochondrion membrane. Its function is as follows. Mitochondrial membrane ATP synthase (F(1)F(0) ATP synthase or Complex V) produces ATP from ADP in the presence of a proton gradient across the membrane which is generated by electron transport complexes of the respiratory chain. F-type ATPases consist of two structural domains, F(1) - containing the extramembraneous catalytic core and F(0) - containing the membrane proton channel, linked together by a central stalk and a peripheral stalk. During catalysis, ATP synthesis in the catalytic domain of F(1) is coupled via a rotary mechanism of the central stalk subunits to proton translocation. Part of the complex F(0) domain. Minor subunit located with subunit a in the membrane. In Candida glabrata (strain ATCC 2001 / BCRC 20586 / JCM 3761 / NBRC 0622 / NRRL Y-65 / CBS 138) (Yeast), this protein is ATP synthase protein 8 (ATP8).